The following is a 151-amino-acid chain: Transcriptional repressor NrdR (151 aa).

Residues 3–34 (CPYCGYEETRVLDSRVDSSGMTVRRRRECVKC) fold into a zinc finger. In terms of domain architecture, ATP-cone spans 49 to 139 (VFVVKKDGKR…VYKDFREIDQ (91 aa)).

It belongs to the NrdR family. Requires Zn(2+) as cofactor.

Functionally, negatively regulates transcription of bacterial ribonucleotide reductase nrd genes and operons by binding to NrdR-boxes. This Thermosipho melanesiensis (strain DSM 12029 / CIP 104789 / BI429) protein is Transcriptional repressor NrdR.